A 276-amino-acid chain; its full sequence is Rhomboid protease GlpG (276 aa).

6 consecutive transmembrane segments (helical) span residues 94–114, 142–162, 169–189, 192–212, 229–249, and 250–270; these read GPVT…MQIL, ALMH…WYLG, LGSG…GYVQ, FSGP…GYVW, LIIF…GMSM, and ANGA…VDSL. Ser-201 (nucleophile) is an active-site residue. His-254 is a catalytic residue.

Belongs to the peptidase S54 family.

The protein localises to the cell inner membrane. It carries out the reaction Cleaves type-1 transmembrane domains using a catalytic dyad composed of serine and histidine that are contributed by different transmembrane domains.. Its function is as follows. Rhomboid-type serine protease that catalyzes intramembrane proteolysis. This is Rhomboid protease GlpG from Escherichia coli O157:H7.